The chain runs to 68 residues: ATP synthase F(0) complex subunit 8 (68 aa).

A helical membrane pass occupies residues 8-21 (VWPTMITPMLLTLF). At Lys54 the chain carries N6-acetyllysine; alternate. Lys54 bears the N6-succinyllysine; alternate mark. Position 57 is an N6-acetyllysine (Lys57).

The protein belongs to the ATPase protein 8 family. As to quaternary structure, component of the ATP synthase complex composed at least of ATP5F1A/subunit alpha, ATP5F1B/subunit beta, ATP5MC1/subunit c (homooctomer), MT-ATP6/subunit a, MT-ATP8/subunit 8, ATP5ME/subunit e, ATP5MF/subunit f, ATP5MG/subunit g, ATP5MK/subunit k, ATP5MJ/subunit j, ATP5F1C/subunit gamma, ATP5F1D/subunit delta, ATP5F1E/subunit epsilon, ATP5PF/subunit F6, ATP5PB/subunit b, ATP5PD/subunit d, ATP5PO/subunit OSCP. ATP synthase complex consists of a soluble F(1) head domain (subunits alpha(3) and beta(3)) - the catalytic core - and a membrane F(0) domain - the membrane proton channel (subunits c, a, 8, e, f, g, k and j). These two domains are linked by a central stalk (subunits gamma, delta, and epsilon) rotating inside the F1 region and a stationary peripheral stalk (subunits F6, b, d, and OSCP). Interacts with PRICKLE3.

It is found in the mitochondrion membrane. Functionally, subunit 8, of the mitochondrial membrane ATP synthase complex (F(1)F(0) ATP synthase or Complex V) that produces ATP from ADP in the presence of a proton gradient across the membrane which is generated by electron transport complexes of the respiratory chain. ATP synthase complex consist of a soluble F(1) head domain - the catalytic core - and a membrane F(1) domain - the membrane proton channel. These two domains are linked by a central stalk rotating inside the F(1) region and a stationary peripheral stalk. During catalysis, ATP synthesis in the catalytic domain of F(1) is coupled via a rotary mechanism of the central stalk subunits to proton translocation. In vivo, can only synthesize ATP although its ATP hydrolase activity can be activated artificially in vitro. Part of the complex F(0) domain. This is ATP synthase F(0) complex subunit 8 from Homo sapiens (Human).